A 240-amino-acid polypeptide reads, in one-letter code: Ditrans,polycis-undecaprenyl-diphosphate synthase ((2E,6E)-farnesyl-diphosphate specific) (240 aa).

The active site involves Asp-18. Position 18 (Asp-18) interacts with Mg(2+). Substrate-binding positions include 19–22, Trp-23, Arg-31, His-35, and 63–65; these read GNGR and SSE. The Proton acceptor role is filled by Asn-66. Substrate contacts are provided by residues Trp-67, Arg-69, Arg-186, and 192–194; that span reads RIS. Glu-205 contacts Mg(2+).

Belongs to the UPP synthase family. Homodimer. The cofactor is Mg(2+).

It catalyses the reaction 8 isopentenyl diphosphate + (2E,6E)-farnesyl diphosphate = di-trans,octa-cis-undecaprenyl diphosphate + 8 diphosphate. Its function is as follows. Catalyzes the sequential condensation of isopentenyl diphosphate (IPP) with (2E,6E)-farnesyl diphosphate (E,E-FPP) to yield (2Z,6Z,10Z,14Z,18Z,22Z,26Z,30Z,34E,38E)-undecaprenyl diphosphate (di-trans,octa-cis-UPP). UPP is the precursor of glycosyl carrier lipid in the biosynthesis of bacterial cell wall polysaccharide components such as peptidoglycan and lipopolysaccharide. The sequence is that of Ditrans,polycis-undecaprenyl-diphosphate synthase ((2E,6E)-farnesyl-diphosphate specific) from Pasteurella multocida (strain Pm70).